A 375-amino-acid polypeptide reads, in one-letter code: Queuine tRNA-ribosyltransferase (375 aa).

Asp-89 acts as the Proton acceptor in catalysis. Substrate contacts are provided by residues 89–93 (DSGGF), Asp-143, Gln-187, and Gly-214. The RNA binding stretch occupies residues 245–251 (GVGKPED). Asp-264 acts as the Nucleophile in catalysis. The RNA binding; important for wobble base 34 recognition stretch occupies residues 269–273 (TRNAR). 4 residues coordinate Zn(2+): Cys-302, Cys-304, Cys-307, and His-333.

It belongs to the queuine tRNA-ribosyltransferase family. As to quaternary structure, homodimer. Within each dimer, one monomer is responsible for RNA recognition and catalysis, while the other monomer binds to the replacement base PreQ1. The cofactor is Zn(2+).

The enzyme catalyses 7-aminomethyl-7-carbaguanine + guanosine(34) in tRNA = 7-aminomethyl-7-carbaguanosine(34) in tRNA + guanine. It functions in the pathway tRNA modification; tRNA-queuosine biosynthesis. Catalyzes the base-exchange of a guanine (G) residue with the queuine precursor 7-aminomethyl-7-deazaguanine (PreQ1) at position 34 (anticodon wobble position) in tRNAs with GU(N) anticodons (tRNA-Asp, -Asn, -His and -Tyr). Catalysis occurs through a double-displacement mechanism. The nucleophile active site attacks the C1' of nucleotide 34 to detach the guanine base from the RNA, forming a covalent enzyme-RNA intermediate. The proton acceptor active site deprotonates the incoming PreQ1, allowing a nucleophilic attack on the C1' of the ribose to form the product. After dissociation, two additional enzymatic reactions on the tRNA convert PreQ1 to queuine (Q), resulting in the hypermodified nucleoside queuosine (7-(((4,5-cis-dihydroxy-2-cyclopenten-1-yl)amino)methyl)-7-deazaguanosine). The polypeptide is Queuine tRNA-ribosyltransferase (Salmonella choleraesuis (strain SC-B67)).